The following is a 37-amino-acid chain: Large ribosomal subunit protein bL36 (37 aa).

Belongs to the bacterial ribosomal protein bL36 family.

This is Large ribosomal subunit protein bL36 from Synechococcus sp. (strain RCC307).